A 129-amino-acid polypeptide reads, in one-letter code: Small ribosomal subunit protein uS9 (129 aa).

The interval 107–129 is disordered; it reads SRTVERKKYGRRKARRSPQFSKR. A compositionally biased stretch (basic residues) spans 114–129; sequence KYGRRKARRSPQFSKR.

Belongs to the universal ribosomal protein uS9 family.

The chain is Small ribosomal subunit protein uS9 from Campylobacter jejuni subsp. jejuni serotype O:23/36 (strain 81-176).